We begin with the raw amino-acid sequence, 329 residues long: Peroxidase 58 (329 aa).

An N-terminal signal peptide occupies residues 1–23 (MGLSKTIPLVLLPILMFGVLSNA). 4 cysteine pairs are disulfide-bonded: C34–C116, C67–C72, C122–C325, and C201–C234. A glycan (N-linked (GlcNAc...) asparagine) is linked at N36. H65 serves as the catalytic Proton acceptor. Ca(2+) is bound by residues D66, V69, G71, D73, and S75. P164 contacts substrate. H194 lines the heme b pocket. T195 contributes to the Ca(2+) binding site. Residue N210 is glycosylated (N-linked (GlcNAc...) asparagine). Ca(2+)-binding residues include D247, S250, and D255.

Belongs to the peroxidase family. Classical plant (class III) peroxidase subfamily. Heme b is required as a cofactor. It depends on Ca(2+) as a cofactor.

The protein resides in the secreted. It carries out the reaction 2 a phenolic donor + H2O2 = 2 a phenolic radical donor + 2 H2O. Functionally, removal of H(2)O(2), oxidation of toxic reductants, biosynthesis and degradation of lignin, suberization, auxin catabolism, response to environmental stresses such as wounding, pathogen attack and oxidative stress. These functions might be dependent on each isozyme/isoform in each plant tissue. The protein is Peroxidase 58 (PER58) of Arabidopsis thaliana (Mouse-ear cress).